Here is a 60-residue protein sequence, read N- to C-terminus: Metallothionein A (60 aa).

The interval 1–28 (MDPCECSKSGTCNCGGSCTCTNCSCKSC) is beta. 20 residues coordinate a divalent metal cation: Cys4, Cys6, Cys12, Cys14, Cys18, Cys20, Cys23, Cys25, Cys28, Cys32, Cys33, Cys35, Cys36, Cys40, Cys43, Cys47, Cys49, Cys54, Cys58, and Cys59. Positions 29–60 (KKSCCPCCPSGCTKCASGCVCKGKTCDTSCCQ) are alpha.

Belongs to the metallothionein superfamily. Type 1 family.

Metallothioneins have a high content of cysteine residues that bind various heavy metals. The sequence is that of Metallothionein A (mta) from Chionodraco rastrospinosus (Ocellated icefish).